Reading from the N-terminus, the 599-residue chain is Aspartate--tRNA(Asp/Asn) ligase (599 aa).

An L-aspartate-binding site is contributed by E172. The interval 196–199 (QLFK) is aspartate. R218 serves as a coordination point for L-aspartate. ATP-binding positions include 218–220 (RDE) and Q227. H454 serves as a coordination point for L-aspartate. E488 is a binding site for ATP. Position 495 (R495) interacts with L-aspartate. Position 540-543 (540-543 (GLDR)) interacts with ATP.

The protein belongs to the class-II aminoacyl-tRNA synthetase family. Type 1 subfamily. In terms of assembly, homodimer.

The protein localises to the cytoplasm. It carries out the reaction tRNA(Asx) + L-aspartate + ATP = L-aspartyl-tRNA(Asx) + AMP + diphosphate. Aspartyl-tRNA synthetase with relaxed tRNA specificity since it is able to aspartylate not only its cognate tRNA(Asp) but also tRNA(Asn). Reaction proceeds in two steps: L-aspartate is first activated by ATP to form Asp-AMP and then transferred to the acceptor end of tRNA(Asp/Asn). This is Aspartate--tRNA(Asp/Asn) ligase from Methylibium petroleiphilum (strain ATCC BAA-1232 / LMG 22953 / PM1).